The following is a 163-amino-acid chain: Phosphopantetheine adenylyltransferase (163 aa).

Ser10 serves as a coordination point for substrate. ATP contacts are provided by residues 10 to 11 (SF) and His18. Residues Lys42, Leu74, and Arg88 each contribute to the substrate site. Residues 89-91 (GLR), Glu99, and 124-130 (YSFLSSS) contribute to the ATP site.

This sequence belongs to the bacterial CoaD family. Homohexamer. It depends on Mg(2+) as a cofactor.

It localises to the cytoplasm. It catalyses the reaction (R)-4'-phosphopantetheine + ATP + H(+) = 3'-dephospho-CoA + diphosphate. It participates in cofactor biosynthesis; coenzyme A biosynthesis; CoA from (R)-pantothenate: step 4/5. In terms of biological role, reversibly transfers an adenylyl group from ATP to 4'-phosphopantetheine, yielding dephospho-CoA (dPCoA) and pyrophosphate. In Bacillus anthracis (strain A0248), this protein is Phosphopantetheine adenylyltransferase.